Consider the following 162-residue polypeptide: NADH-quinone oxidoreductase subunit I (162 aa).

2 4Fe-4S ferredoxin-type domains span residues 54–83 (RRYE…INST) and 93–122 (SSYE…ETNI). [4Fe-4S] cluster contacts are provided by cysteine 63, cysteine 66, cysteine 69, cysteine 73, cysteine 102, cysteine 105, cysteine 108, and cysteine 112.

The protein belongs to the complex I 23 kDa subunit family. NDH-1 is composed of 14 different subunits. Subunits NuoA, H, J, K, L, M, N constitute the membrane sector of the complex. The cofactor is [4Fe-4S] cluster.

It localises to the cell inner membrane. The enzyme catalyses a quinone + NADH + 5 H(+)(in) = a quinol + NAD(+) + 4 H(+)(out). Its function is as follows. NDH-1 shuttles electrons from NADH, via FMN and iron-sulfur (Fe-S) centers, to quinones in the respiratory chain. The immediate electron acceptor for the enzyme in this species is believed to be ubiquinone. Couples the redox reaction to proton translocation (for every two electrons transferred, four hydrogen ions are translocated across the cytoplasmic membrane), and thus conserves the redox energy in a proton gradient. This chain is NADH-quinone oxidoreductase subunit I, found in Francisella philomiragia subsp. philomiragia (strain ATCC 25017 / CCUG 19701 / FSC 153 / O#319-036).